A 359-amino-acid polypeptide reads, in one-letter code: Probable dual-specificity RNA methyltransferase RlmN (359 aa).

Glu-91 (proton acceptor) is an active-site residue. Residues 97–335 (QHYGHSVCVT…CVVRQEHGTD (239 aa)) form the Radical SAM core domain. Cys-104 and Cys-340 are oxidised to a cystine. Cys-111, Cys-115, and Cys-118 together coordinate [4Fe-4S] cluster. Residues 163–164 (GE), Ser-195, 218–220 (SLH), and Asn-296 each bind S-adenosyl-L-methionine. The active-site S-methylcysteine intermediate is the Cys-340.

Belongs to the radical SAM superfamily. RlmN family. The cofactor is [4Fe-4S] cluster.

It localises to the cytoplasm. The catalysed reaction is adenosine(2503) in 23S rRNA + 2 reduced [2Fe-2S]-[ferredoxin] + 2 S-adenosyl-L-methionine = 2-methyladenosine(2503) in 23S rRNA + 5'-deoxyadenosine + L-methionine + 2 oxidized [2Fe-2S]-[ferredoxin] + S-adenosyl-L-homocysteine. The enzyme catalyses adenosine(37) in tRNA + 2 reduced [2Fe-2S]-[ferredoxin] + 2 S-adenosyl-L-methionine = 2-methyladenosine(37) in tRNA + 5'-deoxyadenosine + L-methionine + 2 oxidized [2Fe-2S]-[ferredoxin] + S-adenosyl-L-homocysteine. Specifically methylates position 2 of adenine 2503 in 23S rRNA and position 2 of adenine 37 in tRNAs. The chain is Probable dual-specificity RNA methyltransferase RlmN from Streptococcus pyogenes serotype M12 (strain MGAS2096).